A 551-amino-acid polypeptide reads, in one-letter code: Chaperonin GroEL (551 aa).

Residues Thr30–Pro33, Lys51, Asp87–Thr91, Gly415, and Asp496 each bind ATP.

Belongs to the chaperonin (HSP60) family. Forms a cylinder of 14 subunits composed of two heptameric rings stacked back-to-back. Interacts with the co-chaperonin GroES.

It localises to the cytoplasm. It catalyses the reaction ATP + H2O + a folded polypeptide = ADP + phosphate + an unfolded polypeptide.. In terms of biological role, together with its co-chaperonin GroES, plays an essential role in assisting protein folding. The GroEL-GroES system forms a nano-cage that allows encapsulation of the non-native substrate proteins and provides a physical environment optimized to promote and accelerate protein folding. In Maricaulis maris (strain MCS10) (Caulobacter maris), this protein is Chaperonin GroEL.